The chain runs to 406 residues: MNLSLKVLDKRGFLKQCTNLEELSTLMDREKIVFYVGVDATSASLHIGHLIPFMVMLHLQRQGHIPIILIGGGTTKIGDPSGKDSMRKILLKEDIDENVKTISSQLLKIIDLSNGGYILNNAEWLDGINYIEFLREVGIYFSVNRMLSFETYKRRLKDGLSFIEFNYQLLQSYDFYMLSRMKNCKLQIGGDDQWGNIVSGVDLVNRKSGNKVFGLTLPLITRSDGKKMGKSEKGAVYLDSELYSVYDFYQYFRNIPDLDVKKFLYLFTFLEEEEIERIASVKGQLLNNAKEILAFEITKIVHGKDEALKASSAAKAAFKGGDGRADIPFFKLELTNLEESILLVDLMVLAKVVSSKSEARRLIDSGGVYIDKVRVGDQNYCLCKDNFINGEIELKIGKKKILRIVL.

Tyr35 contributes to the L-tyrosine binding site. Positions 40–49 (ATSASLHIGH) match the 'HIGH' region motif. L-tyrosine is bound by residues Tyr167 and Gln171. The 'KMSKS' region motif lies at 227-231 (KMGKS). Lys230 contributes to the ATP binding site. Residues 341–405 (ILLVDLMVLA…IGKKKILRIV (65 aa)) form the S4 RNA-binding domain.

Belongs to the class-I aminoacyl-tRNA synthetase family. TyrS type 1 subfamily. Homodimer.

The protein resides in the cytoplasm. It catalyses the reaction tRNA(Tyr) + L-tyrosine + ATP = L-tyrosyl-tRNA(Tyr) + AMP + diphosphate + H(+). In terms of biological role, catalyzes the attachment of tyrosine to tRNA(Tyr) in a two-step reaction: tyrosine is first activated by ATP to form Tyr-AMP and then transferred to the acceptor end of tRNA(Tyr). In Borrelia duttonii (strain Ly), this protein is Tyrosine--tRNA ligase.